Consider the following 373-residue polypeptide: Spermidine/putrescine import ATP-binding protein PotA (373 aa).

Positions 5 to 235 constitute an ABC transporter domain; it reads IVFEHVSKKF…PKSSFVADFI (231 aa). 37–44 contacts ATP; it reads GPSGCGKT.

The protein belongs to the ABC transporter superfamily. Spermidine/putrescine importer (TC 3.A.1.11.1) family. In terms of assembly, the complex is composed of two ATP-binding proteins (PotA), two transmembrane proteins (PotB and PotC) and a solute-binding protein (PotD).

It localises to the cell inner membrane. The enzyme catalyses ATP + H2O + polyamine-[polyamine-binding protein]Side 1 = ADP + phosphate + polyamineSide 2 + [polyamine-binding protein]Side 1.. In terms of biological role, part of the ABC transporter complex PotABCD involved in spermidine/putrescine import. Responsible for energy coupling to the transport system. The polypeptide is Spermidine/putrescine import ATP-binding protein PotA (Protochlamydia amoebophila (strain UWE25)).